A 210-amino-acid chain; its full sequence is Ion-translocating oxidoreductase complex subunit G (210 aa).

Residues 9–29 (GVTLAVFAAITTGLTAVINAV) traverse the membrane as a helical segment. The residue at position 175 (T175) is an FMN phosphoryl threonine.

The protein belongs to the RnfG family. The complex is composed of six subunits: RnfA, RnfB, RnfC, RnfD, RnfE and RnfG. Requires FMN as cofactor.

The protein localises to the cell inner membrane. In terms of biological role, part of a membrane-bound complex that couples electron transfer with translocation of ions across the membrane. In Erwinia tasmaniensis (strain DSM 17950 / CFBP 7177 / CIP 109463 / NCPPB 4357 / Et1/99), this protein is Ion-translocating oxidoreductase complex subunit G.